The following is a 167-amino-acid chain: uncharacterized protein (167 aa).

The chain crosses the membrane as a helical span at residues 5–27; that stretch reads LILLTFVSFVFSKTFYYDVYVFF.

It localises to the membrane. This is an uncharacterized protein from Aquifex aeolicus (strain VF5).